A 145-amino-acid polypeptide reads, in one-letter code: NADH-quinone oxidoreductase subunit A 1 (145 aa).

The next 3 membrane-spanning stretches (helical) occupy residues isoleucine 18 to alanine 38, valine 71 to phenylalanine 91, and glycine 104 to leucine 124.

This sequence belongs to the complex I subunit 3 family. NDH-1 is composed of 14 different subunits. Subunits NuoA, H, J, K, L, M, N constitute the membrane sector of the complex.

It localises to the cell inner membrane. The catalysed reaction is a quinone + NADH + 5 H(+)(in) = a quinol + NAD(+) + 4 H(+)(out). NDH-1 shuttles electrons from NADH, via FMN and iron-sulfur (Fe-S) centers, to quinones in the respiratory chain. The immediate electron acceptor for the enzyme in this species is believed to be ubiquinone. Couples the redox reaction to proton translocation (for every two electrons transferred, four hydrogen ions are translocated across the cytoplasmic membrane), and thus conserves the redox energy in a proton gradient. This Geotalea uraniireducens (strain Rf4) (Geobacter uraniireducens) protein is NADH-quinone oxidoreductase subunit A 1.